The sequence spans 37 residues: Large ribosomal subunit protein bL36c (37 aa).

The protein belongs to the bacterial ribosomal protein bL36 family.

The protein localises to the plastid. It is found in the chloroplast. The sequence is that of Large ribosomal subunit protein bL36c from Welwitschia mirabilis (Tree tumbo).